A 158-amino-acid polypeptide reads, in one-letter code: Protein-export protein SecB (158 aa).

This sequence belongs to the SecB family. In terms of assembly, homotetramer, a dimer of dimers. One homotetramer interacts with 1 SecA dimer.

The protein localises to the cytoplasm. In terms of biological role, one of the proteins required for the normal export of preproteins out of the cell cytoplasm. It is a molecular chaperone that binds to a subset of precursor proteins, maintaining them in a translocation-competent state. It also specifically binds to its receptor SecA. The protein is Protein-export protein SecB of Pectobacterium atrosepticum (strain SCRI 1043 / ATCC BAA-672) (Erwinia carotovora subsp. atroseptica).